A 763-amino-acid chain; its full sequence is Heat shock 70 kDa protein 16 (763 aa).

Disordered stretches follow at residues isoleucine 509–glycine 529 and glutamate 701–aspartate 763. Position 528 is a phosphoserine (serine 528). A compositionally biased stretch (basic and acidic residues) spans glutamate 701–asparagine 714.

It belongs to the heat shock protein 70 (TC 1.A.33) family. HSP110/SSE subfamily.

This is Heat shock 70 kDa protein 16 (HSP70-16) from Arabidopsis thaliana (Mouse-ear cress).